Reading from the N-terminus, the 186-residue chain is Folate transporter FolT (186 aa).

5 helical membrane passes run 16–36 (VTLAMLIALAFAIGKLSIPII), 47–67 (IVNVMIGMIGGPIWAFISLAI), 81–101 (FIIWWTLLEAVQGLFYGLFFY), 116–136 (VTIATAIIMLIGSFIFTPLLV), and 153–173 (WLKIFEIPIRILVTMAIMPQL).

Forms a stable energy-coupling factor (ECF) transporter complex composed of a membrane-embedded substrate-binding protein (S component), two ATP-binding proteins (A components) and a transmembrane protein (T component).

It is found in the cell membrane. In terms of biological role, folate-binding protein that interacts with the energy-coupling factor (ECF) ABC-transporter complex. Unlike classic ABC transporters this ECF transporter provides the energy necessary to transport a number of different substrates. The substrates themselves are bound by transmembrane, not extracytoplasmic soluble proteins. The polypeptide is Folate transporter FolT (folT) (Streptococcus mutans serotype c (strain ATCC 700610 / UA159)).